A 559-amino-acid chain; its full sequence is Glycerol kinase (559 aa).

Thr-20 is a binding site for ADP. Residues Thr-20, Ser-21, and Ser-22 each coordinate ATP. Thr-20 serves as a coordination point for sn-glycerol 3-phosphate. Arg-24 is an ADP binding site. Positions 94, 95, and 148 each coordinate sn-glycerol 3-phosphate. Glycerol is bound by residues Arg-94, Glu-95, and Tyr-148. A beta-D-fructose 1,6-bisphosphate-binding site is contributed by Gly-252. Asp-265 contributes to the sn-glycerol 3-phosphate binding site. Glycerol-binding residues include Asp-265 and Gln-266. Residues Thr-287, Gly-332, Gly-433, and Asn-437 each contribute to the ADP site. ATP contacts are provided by Thr-287, Gly-332, and Gly-433. Glu-501 is a binding site for Zn(2+). Residues 532–552 (IFCSLPLGFFIVSSMVMLIGA) form a helical membrane-spanning segment.

The protein belongs to the FGGY kinase family.

It localises to the mitochondrion outer membrane. The protein localises to the nucleus. Its subcellular location is the cytoplasm. The protein resides in the cytosol. It catalyses the reaction glycerol + ATP = sn-glycerol 3-phosphate + ADP + H(+). The protein operates within polyol metabolism; glycerol degradation via glycerol kinase pathway; sn-glycerol 3-phosphate from glycerol: step 1/1. In terms of biological role, kinase that plays a key role in glycerol metabolism, catalyzing its phosphorylation to produce sn-glycerol 3-phosphate. Sn-glycerol 3-phosphate is a crucial intermediate in various metabolic pathways, such as the synthesis of glycerolipids and triglycerides, glycogenesis, glycolysis and gluconeogenesis. The polypeptide is Glycerol kinase (Rattus norvegicus (Rat)).